The chain runs to 906 residues: Probable dipeptidyl-aminopeptidase B (906 aa).

Acidic residues predominate over residues 1–11; it reads MRSSEDREDSE. The tract at residues 1–33 is disordered; sequence MRSSEDREDSELLPANRPRSPSRSSYDSDDSGL. Over 1-85 the chain is Cytoplasmic; the sequence is MRSSEDREDS…TKASSSRSRR (85 aa). Over residues 21–33 the composition is skewed to low complexity; that stretch reads PSRSSYDSDDSGL. The helical; Signal-anchor for type II membrane protein transmembrane segment at 86–106 threads the bilayer; that stretch reads LLWLVVLLCCGGWVVAFVLFI. The Vacuolar portion of the chain corresponds to 107–906; it reads TQGRADYRTA…AKRVWPGFAH (800 aa). Residues N338 and N629 are each glycosylated (N-linked (GlcNAc...) asparagine). The active-site Charge relay system is the S743. The N-linked (GlcNAc...) asparagine glycan is linked to N797. Residues D820 and H853 each act as charge relay system in the active site.

It belongs to the peptidase S9B family.

Its subcellular location is the vacuole membrane. The enzyme catalyses Release of an N-terminal dipeptide, Xaa-Yaa-|-Zaa-, from a polypeptide, preferentially when Yaa is Pro, provided Zaa is neither Pro nor hydroxyproline.. In terms of biological role, type IV dipeptidyl-peptidase which removes N-terminal dipeptides sequentially from polypeptides having unsubstituted N-termini provided that the penultimate residue is proline. This chain is Probable dipeptidyl-aminopeptidase B (dapB), found in Emericella nidulans (strain FGSC A4 / ATCC 38163 / CBS 112.46 / NRRL 194 / M139) (Aspergillus nidulans).